A 572-amino-acid chain; its full sequence is Probable transporter MCH1 (572 aa).

Positions 1-29 (MSSSAPDDTQASRLDADQISTRSSSYASD) are enriched in polar residues. Residues 1-39 (MSSSAPDDTQASRLDADQISTRSSSYASDNDTDSTETRI) form a disordered region. An N-linked (GlcNAc...) asparagine glycan is attached at Asn-30. Helical transmembrane passes span 50–70 (LLAF…VVFS), 89–109 (AVAI…GYIC), 116–136 (PLAL…AGVY), 159–179 (FLML…MAAV), 193–213 (GLAL…LSQA), 232–252 (VFRF…LGTF), 335–355 (LAFL…GTII), 426–446 (FMAF…SGLV), 459–479 (LVGA…TIIW), and 488–508 (YGLI…VYSA). N-linked (GlcNAc...) asparagine glycosylation occurs at Asn-515. A helical transmembrane segment spans residues 539–559 (PTYWAETITVWIAVGLLLWAW).

Belongs to the major facilitator superfamily.

It is found in the vacuole membrane. Probable transporter. The sequence is that of Probable transporter MCH1 (MCH1) from Gibberella zeae (strain ATCC MYA-4620 / CBS 123657 / FGSC 9075 / NRRL 31084 / PH-1) (Wheat head blight fungus).